The following is a 124-amino-acid chain: KESAAAKFERQHMDPSASSISSSNYCNQMMQSRNLTQDRCKPVNTFVHESLADVQAVCFQKNVACKNGQSNCYQSNSAMHITDCRESGNSDYPNCVYKTTQAEKHIIVACEGNPYVPVHFDASV.

The span at 1 to 13 (KESAAAKFERQHM) shows a compositional bias: basic and acidic residues. The segment at 1–23 (KESAAAKFERQHMDPSASSISSS) is disordered. 2 residues coordinate substrate: Lys-7 and Arg-10. The active-site Proton acceptor is the His-12. 4 disulfide bridges follow: Cys-26–Cys-84, Cys-40–Cys-95, Cys-58–Cys-110, and Cys-65–Cys-72. N-linked (GlcNAc...) asparagine glycosylation occurs at Asn-34. Residues 41 to 45 (KPVNT), Lys-66, and Arg-85 contribute to the substrate site. The active-site Proton donor is the His-119.

It belongs to the pancreatic ribonuclease family. Monomer. Interacts with and forms tight 1:1 complexes with RNH1. Dimerization of two such complexes may occur. Interaction with RNH1 inhibits this protein. In terms of tissue distribution, pancreas.

It is found in the secreted. The catalysed reaction is an [RNA] containing cytidine + H2O = an [RNA]-3'-cytidine-3'-phosphate + a 5'-hydroxy-ribonucleotide-3'-[RNA].. It carries out the reaction an [RNA] containing uridine + H2O = an [RNA]-3'-uridine-3'-phosphate + a 5'-hydroxy-ribonucleotide-3'-[RNA].. In terms of biological role, endonuclease that catalyzes the cleavage of RNA on the 3' side of pyrimidine nucleotides. Acts on single-stranded and double-stranded RNA. This Alces alces alces (European moose) protein is Ribonuclease pancreatic (RNASE1).